We begin with the raw amino-acid sequence, 144 residues long: Large ribosomal subunit protein uL13 (144 aa).

It belongs to the universal ribosomal protein uL13 family. Part of the 50S ribosomal subunit.

This protein is one of the early assembly proteins of the 50S ribosomal subunit, although it is not seen to bind rRNA by itself. It is important during the early stages of 50S assembly. The chain is Large ribosomal subunit protein uL13 from Nitrosomonas europaea (strain ATCC 19718 / CIP 103999 / KCTC 2705 / NBRC 14298).